We begin with the raw amino-acid sequence, 668 residues long: Major S-layer protein (668 aa).

The signal sequence occupies residues Met-1–Ala-24. N-linked (GlcNAc...) asparagine glycans are attached at residues Asn-36, Asn-65, Asn-111, Asn-265, Asn-583, Asn-596, Asn-602, Asn-608, Asn-617, and Asn-635. Positions Glu-584–Val-650 are disordered. Polar residues predominate over residues Asn-596 to Ser-611. Acidic residues predominate over residues Glu-631–Glu-641. A helical membrane pass occupies residues Gly-644–Val-664.

This sequence belongs to the Methanosarcinales S-layer protein family. In terms of processing, glycosylated.

The protein resides in the secreted. The protein localises to the cell wall. It is found in the S-layer. It localises to the cell membrane. Functionally, S-layer protein. The S-layer is a paracrystalline mono-layered assembly of proteins which coat the surface of the cell. This chain is Major S-layer protein, found in Methanosarcina barkeri (strain Fusaro / DSM 804).